A 362-amino-acid chain; its full sequence is Peptide chain release factor 1 (362 aa).

Gln-237 carries the N5-methylglutamine modification. A compositionally biased stretch (basic and acidic residues) spans 282–296; the sequence is QQEEDKRRAEADSTR. The tract at residues 282-304 is disordered; that stretch reads QQEEDKRRAEADSTRRSILSTGD.

The protein belongs to the prokaryotic/mitochondrial release factor family. In terms of processing, methylated by PrmC. Methylation increases the termination efficiency of RF1.

It is found in the cytoplasm. Peptide chain release factor 1 directs the termination of translation in response to the peptide chain termination codons UAG and UAA. This chain is Peptide chain release factor 1, found in Tolumonas auensis (strain DSM 9187 / NBRC 110442 / TA 4).